The sequence spans 846 residues: Envelope glycoprotein gp160 (846 aa).

Residues 1–31 (MRAREKERNCQNLWKWGIMLLGMLMTCSAAE) form the signal peptide. Residues 32 to 674 (DLWVTVYYGV…ITKWLWYIKL (643 aa)) lie on the Extracellular side of the membrane. Residues C53 and C73 are joined by a disulfide bond. N-linked (GlcNAc...) asparagine; by host glycans are attached at residues N87, N129, N151, N179, N182, N229, N236, N257, N271, N284, and N290. 5 disulfide bridges follow: C118–C200, C125–C191, C130–C152, C213–C242, and C223–C234. The interval 130–151 (CTDELRNSKGNGKVEEEEKRKN) is V1. Residues 152–191 (CSFNVRDKREQVYALFYKLDIVPIDNNNRTNSTNYRLINC) are V2. The tract at residues 291 to 327 (CTRPYKYTRQRTSIGLRQSLYTITGKKKKTGYIGQAH) is V3. C291 and C328 are oxidised to a cystine. An N-linked (GlcNAc...) asparagine; by host glycan is attached at N351. The CD4-binding loop stretch occupies residues 360 to 370 (SSGGDPEITSH). 2 disulfide bridges follow: C374-C435 and C381-C408. The interval 381–408 (CNTSRLFNSTWNQTNSTGFNNGTVTLPC) is V4. N-linked (GlcNAc...) asparagine; by host glycans are attached at residues N382, N388, N392, N395, N401, N438, N451, and N452. V5 regions lie at residues 450 to 461 (ANNSSHETIRPG) and 453 to 461 (SSHETIRPG). Residues 502 to 522 (AIGLGAVFLGFLGAAGSTMGA) form a fusion peptide region. The immunosuppression stretch occupies residues 564–582 (KQLQARVLAVERYLRDQQL). C588 and C594 are disulfide-bonded. N-linked (GlcNAc...) asparagine; by host glycosylation is found at N601, N606, N615, and N627. Residues 623-657 (REIDNYTGLIYSLIEESQIQQEKNEKELLELDKWA) adopt a coiled-coil conformation. The MPER; binding to GalCer stretch occupies residues 652–673 (ELDKWASLWNWFSITKWLWYIK). A helical transmembrane segment spans residues 675–695 (FIMIVGGLIGLRIVFAVLSVV). The Cytoplasmic portion of the chain corresponds to 696 to 846 (NRVRQGYSPL…IRQGLERLLL (151 aa)). Positions 702–705 (YSPL) match the YXXL motif; contains endocytosis signal motif. S-palmitoyl cysteine; by host attachment occurs at residues C754 and C827. The Di-leucine internalization motif motif lies at 845 to 846 (LL).

This sequence belongs to the HIV-1 env protein family. In terms of assembly, the mature envelope protein (Env) consists of a homotrimer of non-covalently associated gp120-gp41 heterodimers. The resulting complex protrudes from the virus surface as a spike. There seems to be as few as 10 spikes on the average virion. Interacts with host CD4, CCR5 and CXCR4. Gp120 also interacts with the C-type lectins CD209/DC-SIGN and CLEC4M/DC-SIGNR (collectively referred to as DC-SIGN(R)). Gp120 and gp41 interact with GalCer. Gp120 interacts with host ITGA4/ITGB7 complex; on CD4+ T-cells, this interaction results in rapid activation of integrin ITGAL/LFA-1, which facilitates efficient cell-to-cell spreading of HIV-1. Gp120 interacts with cell-associated heparan sulfate; this interaction increases virus infectivity on permissive cells and may be involved in infection of CD4- cells. The mature envelope protein (Env) consists of a homotrimer of non-covalently associated gp120-gp41 heterodimers. The resulting complex protrudes from the virus surface as a spike. There seems to be as few as 10 spikes on the average virion. In terms of processing, highly glycosylated by host. The high number of glycan on the protein is reffered to as 'glycan shield' because it contributes to hide protein sequence from adaptive immune system. Palmitoylation of the transmembrane protein and of Env polyprotein (prior to its proteolytic cleavage) is essential for their association with host cell membrane lipid rafts. Palmitoylation is therefore required for envelope trafficking to classical lipid rafts, but not for viral replication. Post-translationally, specific enzymatic cleavages in vivo yield mature proteins. Envelope glycoproteins are synthesized as an inactive precursor that is heavily N-glycosylated and processed likely by host cell furin in the Golgi to yield the mature SU and TM proteins. The cleavage site between SU and TM requires the minimal sequence [KR]-X-[KR]-R. About 2 of the 9 disulfide bonds of gp41 are reduced by P4HB/PDI, following binding to CD4 receptor.

Its subcellular location is the virion membrane. It localises to the host cell membrane. It is found in the host endosome membrane. Its function is as follows. Oligomerizes in the host endoplasmic reticulum into predominantly trimers. In a second time, gp160 transits in the host Golgi, where glycosylation is completed. The precursor is then proteolytically cleaved in the trans-Golgi and thereby activated by cellular furin or furin-like proteases to produce gp120 and gp41. Attaches the virus to the host lymphoid cell by binding to the primary receptor CD4. This interaction induces a structural rearrangement creating a high affinity binding site for a chemokine coreceptor like CXCR4 and/or CCR5. Acts as a ligand for CD209/DC-SIGN and CLEC4M/DC-SIGNR, which are respectively found on dendritic cells (DCs), and on endothelial cells of liver sinusoids and lymph node sinuses. These interactions allow capture of viral particles at mucosal surfaces by these cells and subsequent transmission to permissive cells. HIV subverts the migration properties of dendritic cells to gain access to CD4+ T-cells in lymph nodes. Virus transmission to permissive T-cells occurs either in trans (without DCs infection, through viral capture and transmission), or in cis (following DCs productive infection, through the usual CD4-gp120 interaction), thereby inducing a robust infection. In trans infection, bound virions remain infectious over days and it is proposed that they are not degraded, but protected in non-lysosomal acidic organelles within the DCs close to the cell membrane thus contributing to the viral infectious potential during DCs' migration from the periphery to the lymphoid tissues. On arrival at lymphoid tissues, intact virions recycle back to DCs' cell surface allowing virus transmission to CD4+ T-cells. In terms of biological role, acts as a class I viral fusion protein. Under the current model, the protein has at least 3 conformational states: pre-fusion native state, pre-hairpin intermediate state, and post-fusion hairpin state. During fusion of viral and target intracellular membranes, the coiled coil regions (heptad repeats) assume a trimer-of-hairpins structure, positioning the fusion peptide in close proximity to the C-terminal region of the ectodomain. The formation of this structure appears to drive apposition and subsequent fusion of viral and target cell membranes. Complete fusion occurs in host cell endosomes and is dynamin-dependent, however some lipid transfer might occur at the plasma membrane. The virus undergoes clathrin-dependent internalization long before endosomal fusion, thus minimizing the surface exposure of conserved viral epitopes during fusion and reducing the efficacy of inhibitors targeting these epitopes. Membranes fusion leads to delivery of the nucleocapsid into the cytoplasm. The chain is Envelope glycoprotein gp160 from Human immunodeficiency virus type 1 group M subtype D (isolate NDK) (HIV-1).